Consider the following 341-residue polypeptide: Basic membrane protein B (341 aa).

The signal sequence occupies residues 1-14; sequence MRIVIFILGILLTS. Cys15 carries the N-palmitoyl cysteine lipid modification. Cys15 carries S-diacylglycerol cysteine lipidation.

Belongs to the BMP lipoprotein family. Monomer.

It is found in the cell inner membrane. Functionally, may be part of an ABC-type nucleoside uptake system involved in the purine salvage pathway. The sequence is that of Basic membrane protein B (bmpB) from Borrelia garinii subsp. bavariensis (strain ATCC BAA-2496 / DSM 23469 / PBi) (Borreliella bavariensis).